We begin with the raw amino-acid sequence, 314 residues long: GTPase Era (314 aa).

Residues 21-189 (KSGFVGIIGR…QKTLINLLEP (169 aa)) enclose the Era-type G domain. The interval 29–36 (GRPNVGKS) is G1. 29–36 (GRPNVGKS) is a binding site for GTP. The segment at 55–59 (QTTRN) is G2. The segment at 76–79 (DTPG) is G3. GTP is bound by residues 76–80 (DTPGI) and 138–141 (NKSD). A G4 region spans residues 138–141 (NKSD). Residues 168–170 (FSA) form a G5 region. Residues 212–296 (IREQILQQTR…YLQLFVKVEP (85 aa)) enclose the KH type-2 domain.

It belongs to the TRAFAC class TrmE-Era-EngA-EngB-Septin-like GTPase superfamily. Era GTPase family. Monomer.

It is found in the cytoplasm. The protein localises to the cell inner membrane. Functionally, an essential GTPase that binds both GDP and GTP, with rapid nucleotide exchange. Plays a role in 16S rRNA processing and 30S ribosomal subunit biogenesis and possibly also in cell cycle regulation and energy metabolism. This chain is GTPase Era, found in Rippkaea orientalis (strain PCC 8801 / RF-1) (Cyanothece sp. (strain PCC 8801)).